A 167-amino-acid polypeptide reads, in one-letter code: Ubiquitin-fold modifier-conjugating enzyme 1 (167 aa).

Residue C116 is the Glycyl thioester intermediate of the active site.

The protein belongs to the ubiquitin-conjugating enzyme family. UFC1 subfamily. In terms of assembly, interacts with UBA5 (via C-terminus). Interacts with UFL1. Interacts with UFM1.

E2-like enzyme which specifically catalyzes the second step in ufmylation. Accepts the ubiquitin-like modifier UFM1 from the E1 enzyme UBA5 and forms an intermediate with UFM1 via a thioester linkage. Ufmylation is involved in various processes, such as ribosome recycling, response to DNA damage, interferon response or reticulophagy (also called ER-phagy). The protein is Ubiquitin-fold modifier-conjugating enzyme 1 of Salmo salar (Atlantic salmon).